Reading from the N-terminus, the 296-residue chain is Probable AP endonuclease (296 aa).

Cysteine 16 and cysteine 20 are oxidised to a cystine. Positions 78, 115, 142, 182, 218, 231, 233, and 271 each coordinate Zn(2+).

It belongs to the AP endonuclease 2 family. It depends on Zn(2+) as a cofactor.

The protein resides in the host nucleus. The protein localises to the host cytoplasm. It is found in the virion. Functionally, endonuclease that plays a role in DNA repair. Cleaves phosphodiester bonds on the 5' side of apurinic or apyrimidinic sites (AP sites). In addition to endonuclease activity, the ASFV enzyme has a proofreading 3'-5' exonuclease activity that is considerably more efficient in the elimination of a mismatch than in that of a correctly paired base. Displays 3'-phosphatase and 3'-repair diesterase activities. The single nucleotide gaps generated by the AP endonuclease are filled by the viral AP endonuclease and DNA ligase. The chain is Probable AP endonuclease from Ornithodoros (relapsing fever ticks).